A 272-amino-acid polypeptide reads, in one-letter code: Undecaprenyl-diphosphatase (272 aa).

A run of 7 helical transmembrane segments spans residues 39 to 59 (SGLTFDVALHFGTFLAIFVYF), 87 to 107 (WMIVLASIPAAIAGKTLEQPI), 113 to 133 (SSPLMIALMLILFGLGLGLTD), 145 to 165 (ITLGTAMLVGCFQCLALVPGV), 188 to 208 (FSFLLSLPIVFGAALLKGLHL), 220 to 240 (PMLVGVAVSAVVGYISVAFLL), and 251 to 271 (FVWYRVAAGIGVMALLGVGLL).

This sequence belongs to the UppP family.

It is found in the cell inner membrane. The catalysed reaction is di-trans,octa-cis-undecaprenyl diphosphate + H2O = di-trans,octa-cis-undecaprenyl phosphate + phosphate + H(+). In terms of biological role, catalyzes the dephosphorylation of undecaprenyl diphosphate (UPP). Confers resistance to bacitracin. In Trichlorobacter lovleyi (strain ATCC BAA-1151 / DSM 17278 / SZ) (Geobacter lovleyi), this protein is Undecaprenyl-diphosphatase.